The sequence spans 89 residues: Putative membrane protein insertion efficiency factor (89 aa).

This sequence belongs to the UPF0161 family.

It localises to the cell membrane. Functionally, could be involved in insertion of integral membrane proteins into the membrane. The chain is Putative membrane protein insertion efficiency factor from Exiguobacterium sp. (strain ATCC BAA-1283 / AT1b).